We begin with the raw amino-acid sequence, 177 residues long: ATP synthase subunit delta (177 aa).

This sequence belongs to the ATPase delta chain family. As to quaternary structure, F-type ATPases have 2 components, F(1) - the catalytic core - and F(0) - the membrane proton channel. F(1) has five subunits: alpha(3), beta(3), gamma(1), delta(1), epsilon(1). F(0) has three main subunits: a(1), b(2) and c(10-14). The alpha and beta chains form an alternating ring which encloses part of the gamma chain. F(1) is attached to F(0) by a central stalk formed by the gamma and epsilon chains, while a peripheral stalk is formed by the delta and b chains.

It localises to the cell inner membrane. Functionally, f(1)F(0) ATP synthase produces ATP from ADP in the presence of a proton or sodium gradient. F-type ATPases consist of two structural domains, F(1) containing the extramembraneous catalytic core and F(0) containing the membrane proton channel, linked together by a central stalk and a peripheral stalk. During catalysis, ATP synthesis in the catalytic domain of F(1) is coupled via a rotary mechanism of the central stalk subunits to proton translocation. In terms of biological role, this protein is part of the stalk that links CF(0) to CF(1). It either transmits conformational changes from CF(0) to CF(1) or is implicated in proton conduction. The sequence is that of ATP synthase subunit delta from Colwellia psychrerythraea (strain 34H / ATCC BAA-681) (Vibrio psychroerythus).